Here is a 193-residue protein sequence, read N- to C-terminus: Large ribosomal subunit protein bL25 (193 aa).

It belongs to the bacterial ribosomal protein bL25 family. CTC subfamily. Part of the 50S ribosomal subunit; part of the 5S rRNA/L5/L18/L25 subcomplex. Contacts the 5S rRNA. Binds to the 5S rRNA independently of L5 and L18.

This is one of the proteins that binds to the 5S RNA in the ribosome where it forms part of the central protuberance. This chain is Large ribosomal subunit protein bL25, found in Clostridium tetani (strain Massachusetts / E88).